Here is a 282-residue protein sequence, read N- to C-terminus: ATP synthase gamma chain (282 aa).

This sequence belongs to the ATPase gamma chain family. In terms of assembly, F-type ATPases have 2 components, CF(1) - the catalytic core - and CF(0) - the membrane proton channel. CF(1) has five subunits: alpha(3), beta(3), gamma(1), delta(1), epsilon(1). CF(0) has three main subunits: a, b and c. In this bacterium the a and b subunits are transcribed but do not seem to be translated, thus the ATP synthase consists of the alpha, beta, gamma, delta, epsilon and c subunits.

The protein resides in the cell membrane. Functionally, produces ATP from ADP in the presence of a proton gradient across the membrane. The gamma chain is believed to be important in regulating ATPase activity and the flow of protons through the CF(0) complex. The protein is ATP synthase gamma chain of Moorella thermoacetica (strain ATCC 39073 / JCM 9320).